A 552-amino-acid polypeptide reads, in one-letter code: N-acetylglucosamine-6-sulfatase (552 aa).

An N-terminal signal peptide occupies residues 1–36 (MRLLPLAPGRLRRGSPRHLPSCSPALLLLVLGGCLG). Ca(2+) is bound by residues aspartate 55, aspartate 56, and cysteine 91. The Nucleophile role is filled by cysteine 91. Position 91 is a 3-oxoalanine (Cys) (cysteine 91). 7 N-linked (GlcNAc...) asparagine glycosylation sites follow: asparagine 111, asparagine 117, asparagine 183, asparagine 198, asparagine 210, asparagine 279, and asparagine 317. Positions 326 and 327 each coordinate Ca(2+). N-linked (GlcNAc...) asparagine glycans are attached at residues asparagine 362, asparagine 387, asparagine 405, asparagine 422, asparagine 449, and asparagine 480. Position 541 is a phosphoserine (serine 541).

This sequence belongs to the sulfatase family. Requires Ca(2+) as cofactor. Post-translationally, the form A (78 kDa) is processed by internal peptidase cleavage to a 32 kDa N-terminal species (form B) and a 48 kDa C-terminal species. The conversion to 3-oxoalanine (also known as C-formylglycine, FGly), of a serine or cysteine residue in prokaryotes and of a cysteine residue in eukaryotes, is critical for catalytic activity.

It is found in the lysosome. It catalyses the reaction Hydrolysis of the 6-sulfate groups of the N-acetyl-D-glucosamine 6-sulfate units of heparan sulfate and keratan sulfate.. In terms of biological role, hydrolyzes 6-sulfate groups in N-acetyl-d-glucosaminide units of heparin sulfate and keratan sulfate. In Homo sapiens (Human), this protein is N-acetylglucosamine-6-sulfatase (GNS).